The chain runs to 91 residues: uncharacterized protein (91 aa).

This is an uncharacterized protein from Bacillus anthracis.